A 300-amino-acid polypeptide reads, in one-letter code: Large ribosomal subunit protein bL9m (300 aa).

It belongs to the bacterial ribosomal protein bL9 family. As to quaternary structure, component of the mitochondrial large ribosomal subunit (mt-LSU). Mature N.crassa 74S mitochondrial ribosomes consist of a small (37S) and a large (54S) subunit. The 37S small subunit contains a 16S ribosomal RNA (16S mt-rRNA) and 32 different proteins. The 54S large subunit contains a 23S rRNA (23S mt-rRNA) and 42 different proteins.

Its subcellular location is the mitochondrion. In terms of biological role, component of the mitochondrial ribosome (mitoribosome), a dedicated translation machinery responsible for the synthesis of mitochondrial genome-encoded proteins, including at least some of the essential transmembrane subunits of the mitochondrial respiratory chain. The mitoribosomes are attached to the mitochondrial inner membrane and translation products are cotranslationally integrated into the membrane. The protein is Large ribosomal subunit protein bL9m (mrpl50) of Neurospora crassa (strain ATCC 24698 / 74-OR23-1A / CBS 708.71 / DSM 1257 / FGSC 987).